The following is a 629-amino-acid chain: Plastin-1 (629 aa).

An N-acetylmethionine modification is found at methionine 1. 2 consecutive EF-hand domains span residues 11–46 and 51–86; these read EELE…ASLP and KVRE…LKSK. The Ca(2+) site is built by aspartate 24, aspartate 26, serine 28, tyrosine 30, glutamate 35, aspartate 64, asparagine 66, aspartate 68, lysine 70, and glutamate 75. Actin-binding stretches follow at residues 108 to 380 and 381 to 625; these read TSTI…CLHK and PNNN…GKGL. 4 consecutive Calponin-homology (CH) domains span residues 122 to 238, 266 to 376, 395 to 504, and 516 to 625; these read EEEK…KVGL, LSPE…NTYP, SKEE…RRYT, and KVND…GKGL.

As to quaternary structure, monomer. Post-translationally, phosphorylated. As to expression, in small intestine, colon, and kidney; relatively lower levels of expression are detected in the lung and stomach.

It is found in the cytoplasm. The protein resides in the cell projection. It localises to the stereocilium. Actin-bundling protein. In the inner ear, it is required for stereocilia formation. Mediates liquid packing of actin filaments that is necessary for stereocilia to grow to their proper dimensions. The chain is Plastin-1 (PLS1) from Homo sapiens (Human).